Consider the following 114-residue polypeptide: Ribonuclease P protein component (114 aa).

This sequence belongs to the RnpA family. In terms of assembly, consists of a catalytic RNA component (M1 or rnpB) and a protein subunit.

It carries out the reaction Endonucleolytic cleavage of RNA, removing 5'-extranucleotides from tRNA precursor.. Its function is as follows. RNaseP catalyzes the removal of the 5'-leader sequence from pre-tRNA to produce the mature 5'-terminus. It can also cleave other RNA substrates such as 4.5S RNA. The protein component plays an auxiliary but essential role in vivo by binding to the 5'-leader sequence and broadening the substrate specificity of the ribozyme. The sequence is that of Ribonuclease P protein component from Exiguobacterium sp. (strain ATCC BAA-1283 / AT1b).